The following is a 187-amino-acid chain: MNLQHHFLIAMPALQDSVFKRSVVYICEHNEDGAMGLIINKPMDQFSVENVLKKLKIDPTPRDPAIRLDKPVFMGGPLADDRGFILHTPCPGFGSSISISEDTMITTSKDVLETLGTPSQPENTLVALGYSAWENGQLEEELLENAWLTTPADKDILFHTPIAERWRAAARKLGIDIHNISTEAGHA.

Belongs to the UPF0301 (AlgH) family.

The polypeptide is UPF0301 protein PC1_3712 (Pectobacterium carotovorum subsp. carotovorum (strain PC1)).